Here is a 644-residue protein sequence, read N- to C-terminus: Exoribonuclease 2 (644 aa).

Positions 189 to 516 (REDLTALDFV…NHRLLKAVIK (328 aa)) constitute an RNB domain. The region spanning 561 to 643 (DTRFAAEIVD…ETRSIIARPV (83 aa)) is the S1 motif domain.

Belongs to the RNR ribonuclease family. RNase II subfamily.

The protein resides in the cytoplasm. It catalyses the reaction Exonucleolytic cleavage in the 3'- to 5'-direction to yield nucleoside 5'-phosphates.. Involved in mRNA degradation. Hydrolyzes single-stranded polyribonucleotides processively in the 3' to 5' direction. The protein is Exoribonuclease 2 of Escherichia coli (strain SMS-3-5 / SECEC).